A 77-amino-acid polypeptide reads, in one-letter code: Large ribosomal subunit protein uL24 (77 aa).

The interval 42–61 (KKHQKPSQTNANGGVVESEG) is disordered.

The protein belongs to the universal ribosomal protein uL24 family. Part of the 50S ribosomal subunit.

One of two assembly initiator proteins, it binds directly to the 5'-end of the 23S rRNA, where it nucleates assembly of the 50S subunit. Functionally, one of the proteins that surrounds the polypeptide exit tunnel on the outside of the subunit. The chain is Large ribosomal subunit protein uL24 from Lactobacillus helveticus (strain DPC 4571).